Reading from the N-terminus, the 169-residue chain is Crossover junction endodeoxyribonuclease RuvC (169 aa).

Active-site residues include D13, E73, and D145. Mg(2+) contacts are provided by D13, E73, and D145.

It belongs to the RuvC family. In terms of assembly, homodimer which binds Holliday junction (HJ) DNA. The HJ becomes 2-fold symmetrical on binding to RuvC with unstacked arms; it has a different conformation from HJ DNA in complex with RuvA. In the full resolvosome a probable DNA-RuvA(4)-RuvB(12)-RuvC(2) complex forms which resolves the HJ. Mg(2+) serves as cofactor.

The protein resides in the cytoplasm. It carries out the reaction Endonucleolytic cleavage at a junction such as a reciprocal single-stranded crossover between two homologous DNA duplexes (Holliday junction).. Functionally, the RuvA-RuvB-RuvC complex processes Holliday junction (HJ) DNA during genetic recombination and DNA repair. Endonuclease that resolves HJ intermediates. Cleaves cruciform DNA by making single-stranded nicks across the HJ at symmetrical positions within the homologous arms, yielding a 5'-phosphate and a 3'-hydroxyl group; requires a central core of homology in the junction. The consensus cleavage sequence is 5'-(A/T)TT(C/G)-3'. Cleavage occurs on the 3'-side of the TT dinucleotide at the point of strand exchange. HJ branch migration catalyzed by RuvA-RuvB allows RuvC to scan DNA until it finds its consensus sequence, where it cleaves and resolves the cruciform DNA. The polypeptide is Crossover junction endodeoxyribonuclease RuvC (Solidesulfovibrio magneticus (strain ATCC 700980 / DSM 13731 / RS-1) (Desulfovibrio magneticus)).